The primary structure comprises 61 residues: Small ribosomal subunit protein uS14 (61 aa).

Zn(2+) is bound by residues cysteine 24, cysteine 27, cysteine 40, and cysteine 43.

This sequence belongs to the universal ribosomal protein uS14 family. Zinc-binding uS14 subfamily. In terms of assembly, part of the 30S ribosomal subunit. Contacts proteins S3 and S10. Requires Zn(2+) as cofactor.

In terms of biological role, binds 16S rRNA, required for the assembly of 30S particles and may also be responsible for determining the conformation of the 16S rRNA at the A site. In Thermus aquaticus, this protein is Small ribosomal subunit protein uS14.